The chain runs to 452 residues: UDP-N-acetylmuramoylalanine--D-glutamate ligase (452 aa).

119–125 provides a ligand contact to ATP; the sequence is GSNGKTT.

The protein belongs to the MurCDEF family.

It is found in the cytoplasm. The catalysed reaction is UDP-N-acetyl-alpha-D-muramoyl-L-alanine + D-glutamate + ATP = UDP-N-acetyl-alpha-D-muramoyl-L-alanyl-D-glutamate + ADP + phosphate + H(+). It participates in cell wall biogenesis; peptidoglycan biosynthesis. Functionally, cell wall formation. Catalyzes the addition of glutamate to the nucleotide precursor UDP-N-acetylmuramoyl-L-alanine (UMA). The polypeptide is UDP-N-acetylmuramoylalanine--D-glutamate ligase (Streptococcus pyogenes serotype M4 (strain MGAS10750)).